The primary structure comprises 102 residues: MAGQKIRIRLKSYDHEVIDVSARKIVETVTRAGATVVGPVPLPTEKNVYCVIRSPHKYKDSREHFEMRTHKRLIDIIDPTPKAVDSLMRLDLPADVNIEIKL.

Belongs to the universal ribosomal protein uS10 family. Part of the 30S ribosomal subunit.

Its function is as follows. Involved in the binding of tRNA to the ribosomes. The sequence is that of Small ribosomal subunit protein uS10 from Arthrobacter sp. (strain FB24).